The following is a 185-amino-acid chain: Large ribosomal subunit protein uL22 (185 aa).

It belongs to the universal ribosomal protein uL22 family. As to quaternary structure, component of the large ribosomal subunit. Mature ribosomes consist of a small (40S) and a large (60S) subunit. The 40S subunit contains about 32 different proteins and 1 molecule of RNA (18S). The 60S subunit contains 45 different proteins and 3 molecules of RNA (25S, 5.8S and 5S).

The protein localises to the cytoplasm. Its function is as follows. Component of the ribosome, a large ribonucleoprotein complex responsible for the synthesis of proteins in the cell. The small ribosomal subunit (SSU) binds messenger RNAs (mRNAs) and translates the encoded message by selecting cognate aminoacyl-transfer RNA (tRNA) molecules. The large subunit (LSU) contains the ribosomal catalytic site termed the peptidyl transferase center (PTC), which catalyzes the formation of peptide bonds, thereby polymerizing the amino acids delivered by tRNAs into a polypeptide chain. The nascent polypeptides leave the ribosome through a tunnel in the LSU and interact with protein factors that function in enzymatic processing, targeting, and the membrane insertion of nascent chains at the exit of the ribosomal tunnel. The polypeptide is Large ribosomal subunit protein uL22 (Candida albicans (strain SC5314 / ATCC MYA-2876) (Yeast)).